Consider the following 382-residue polypeptide: Glutamyl-tRNA reductase (382 aa).

Residues 38–41, Ser-85, 90–92, and Gln-96 contribute to the substrate site; these read TCNR and ENQ. Cys-39 (nucleophile) is an active-site residue. 164–169 is a binding site for NADP(+); that stretch reads GAGEIG.

This sequence belongs to the glutamyl-tRNA reductase family. Homodimer.

The catalysed reaction is (S)-4-amino-5-oxopentanoate + tRNA(Glu) + NADP(+) = L-glutamyl-tRNA(Glu) + NADPH + H(+). Its pathway is porphyrin-containing compound metabolism; protoporphyrin-IX biosynthesis; 5-aminolevulinate from L-glutamyl-tRNA(Glu): step 1/2. Catalyzes the NADPH-dependent reduction of glutamyl-tRNA(Glu) to glutamate 1-semialdehyde (GSA). In Methanococcus maripaludis (strain DSM 14266 / JCM 13030 / NBRC 101832 / S2 / LL), this protein is Glutamyl-tRNA reductase.